A 109-amino-acid polypeptide reads, in one-letter code: Cell division protein ZapA (109 aa).

Residues 22–99 (EQQDALNMAA…IEQALLEQGR (78 aa)) adopt a coiled-coil conformation.

Belongs to the ZapA family. Type 1 subfamily. In terms of assembly, homodimer. Interacts with FtsZ.

It is found in the cytoplasm. Its function is as follows. Activator of cell division through the inhibition of FtsZ GTPase activity, therefore promoting FtsZ assembly into bundles of protofilaments necessary for the formation of the division Z ring. It is recruited early at mid-cell but it is not essential for cell division. In Yersinia pseudotuberculosis serotype O:1b (strain IP 31758), this protein is Cell division protein ZapA.